Reading from the N-terminus, the 166-residue chain is Nucleotide-binding protein CV_2047 (166 aa).

Belongs to the YajQ family.

Nucleotide-binding protein. This is Nucleotide-binding protein CV_2047 from Chromobacterium violaceum (strain ATCC 12472 / DSM 30191 / JCM 1249 / CCUG 213 / NBRC 12614 / NCIMB 9131 / NCTC 9757 / MK).